A 107-amino-acid chain; its full sequence is Pyrimidine/purine nucleoside phosphorylase (107 aa).

Belongs to the nucleoside phosphorylase PpnP family.

The enzyme catalyses a purine D-ribonucleoside + phosphate = a purine nucleobase + alpha-D-ribose 1-phosphate. The catalysed reaction is adenosine + phosphate = alpha-D-ribose 1-phosphate + adenine. It catalyses the reaction cytidine + phosphate = cytosine + alpha-D-ribose 1-phosphate. It carries out the reaction guanosine + phosphate = alpha-D-ribose 1-phosphate + guanine. The enzyme catalyses inosine + phosphate = alpha-D-ribose 1-phosphate + hypoxanthine. The catalysed reaction is thymidine + phosphate = 2-deoxy-alpha-D-ribose 1-phosphate + thymine. It catalyses the reaction uridine + phosphate = alpha-D-ribose 1-phosphate + uracil. It carries out the reaction xanthosine + phosphate = alpha-D-ribose 1-phosphate + xanthine. Functionally, catalyzes the phosphorolysis of diverse nucleosides, yielding D-ribose 1-phosphate and the respective free bases. Can use uridine, adenosine, guanosine, cytidine, thymidine, inosine and xanthosine as substrates. Also catalyzes the reverse reactions. The protein is Pyrimidine/purine nucleoside phosphorylase of Aromatoleum aromaticum (strain DSM 19018 / LMG 30748 / EbN1) (Azoarcus sp. (strain EbN1)).